A 277-amino-acid polypeptide reads, in one-letter code: Antigen 1 (277 aa).

The first 16 residues, 1 to 16 (MQLLALTLALCASIAA), serve as a signal peptide directing secretion. 4 N-linked (GlcNAc...) asparagine glycosylation sites follow: asparagine 41, asparagine 71, asparagine 127, and asparagine 200. Positions 230–277 (CVGGEEENDGQGEEQTEEPAQDDQQDEAAEEEIPENCHTHEGGELHCT) are disordered. Over residues 233–263 (GEEENDGQGEEQTEEPAQDDQQDEAAEEEIP) the composition is skewed to acidic residues. The span at 264-277 (ENCHTHEGGELHCT) shows a compositional bias: basic and acidic residues.

The protein belongs to the ZPS1 family.

This Emericella nidulans (strain FGSC A4 / ATCC 38163 / CBS 112.46 / NRRL 194 / M139) (Aspergillus nidulans) protein is Antigen 1 (aspnd1).